Reading from the N-terminus, the 622-residue chain is MEPPDARAGLLWLTFLLSGYSGAQAELHVSVPPRVEVMRGEQVALDCTPREHPEHYVLEWFLVDGTGARHRLASVEPQGSEFLGTVHSLGRVPPYEVDSRGRLVIAKVQVGDGRDYVCVVKAGAAGTSEATSSVRVFATPEDTEVSPNKGTLSVMDQFAQEIATCSSNNGNPVPRITWYRNGQRLEVPMEVNQKGYITIRTVREASGLYSLTSTLYLRLHKDDRDANFHCAAHYDLPSGQHGRLDSHTFRLTLHYPTEHVEFWVGSPSTTEGWVREGDAVQLLCQGDGSPSPEYSFFRQQGTQEEQLNVNLKGNLTLERVHRNQSGIYGCRVEDYDADEEVQLVKKLKLHVAYLDPLELSVPEELFVFLNSSSTVVNCSARGLPTPTVRWTKDSVTLADGPMLSLQSVTFDSAGTYTCEASTPTVPLLSRTQSFQLIVQGAPELKPNEIMPKSGNSWTEGDEVMLTCSARGFPEPKLTWSQRGDTPAEPPFEGRGWKSSSLMVKVTSALSREGVSCEASNIHGKKGHVFHFGSVAPQTAQAGVAVMAVAVSVGLLLLVVAAFYCMRRKGRPGCCRRAEKGAPPAREPELSHSGSERPEHTGLLMGGPSGGGRGGSGGFGDEC.

The first 25 residues, 1-25 (MEPPDARAGLLWLTFLLSGYSGAQA), serve as a signal peptide directing secretion. Ig-like V-type domains lie at 26 to 135 (ELHV…SSVR) and 140 to 250 (PEDT…HTFR). At 26 to 541 (ELHVSVPPRV…GSVAPQTAQA (516 aa)) the chain is on the extracellular side. Cystine bridges form between Cys-47/Cys-118, Cys-165/Cys-230, and Cys-284/Cys-330. Ig-like C2-type domains are found at residues 267–342 (PSTT…EEVQ), 356–435 (PLEL…QSFQ), and 442–532 (PELK…FHFG). N-linked (GlcNAc...) asparagine glycans are attached at residues Asn-314, Asn-323, Asn-370, and Asn-377. Intrachain disulfides connect Cys-378–Cys-418 and Cys-467–Cys-516. A helical transmembrane segment spans residues 542-562 (GVAVMAVAVSVGLLLLVVAAF). Over 563–622 (YCMRRKGRPGCCRRAEKGAPPAREPELSHSGSERPEHTGLLMGGPSGGGRGGSGGFGDEC) the chain is Cytoplasmic. The disordered stretch occupies residues 574-622 (CRRAEKGAPPAREPELSHSGSERPEHTGLLMGGPSGGGRGGSGGFGDEC). Residues 575–599 (RRAEKGAPPAREPELSHSGSERPEH) show a composition bias toward basic and acidic residues. Phosphoserine is present on residues Ser-590, Ser-592, Ser-594, and Ser-615. A compositionally biased stretch (gly residues) spans 603–622 (LMGGPSGGGRGGSGGFGDEC).

Homodimer. Interacts with ITGA4:ITGB1. Interacts with spectrins SPTA1 and SPTB1. Epinephrine-stimulated phosphorylation of Ser-615 by PKA enhances adhesion to laminin. Ser-615 can also be phosphorylated by AKT1.

The protein resides in the cell membrane. In terms of biological role, transmembrane glycoprotein that functions as both a receptor and an adhesion molecule playing a crucial role in cell adhesion, motility, migration and invasion. Extracellular domain enables binding to extracellular matrix proteins, such as laminin, integrin and other ligands while its intracellular domain interacts with cytoskeletal proteins like hemoglobin, facilitating cell signal transduction. Serves as a receptor for laminin alpha-5/LAMA5 to promote cell adhesion. Mechanistically, JAK2 induces BCAM phosphorylation and activates its adhesion to laminin by stimulating a Rap1/AKT signaling pathway in the absence of EPOR. The sequence is that of Basal cell adhesion molecule (Bcam) from Mus musculus (Mouse).